The chain runs to 459 residues: UDP-N-acetylmuramate--L-alanine ligase (459 aa).

An ATP-binding site is contributed by 118–124; it reads GTHGKTT.

It belongs to the MurCDEF family.

Its subcellular location is the cytoplasm. It carries out the reaction UDP-N-acetyl-alpha-D-muramate + L-alanine + ATP = UDP-N-acetyl-alpha-D-muramoyl-L-alanine + ADP + phosphate + H(+). Its pathway is cell wall biogenesis; peptidoglycan biosynthesis. Its function is as follows. Cell wall formation. In Agathobacter rectalis (strain ATCC 33656 / DSM 3377 / JCM 17463 / KCTC 5835 / VPI 0990) (Eubacterium rectale), this protein is UDP-N-acetylmuramate--L-alanine ligase.